Consider the following 91-residue polypeptide: Sec-independent protein translocase protein TatA (91 aa).

The chain crosses the membrane as a helical span at residues 1–21; it reads MGAMSPWHWAIVALVVIILFG. The tract at residues 44–91 is disordered; that stretch reads KEMQNDNSTPAPTAQQSAPAELPVADTTTAPVTPPAPVQPQHTEPKSA. Low complexity predominate over residues 51–74; the sequence is STPAPTAQQSAPAELPVADTTTAP.

It belongs to the TatA/E family. As to quaternary structure, the Tat system comprises two distinct complexes: a TatABC complex, containing multiple copies of TatA, TatB and TatC subunits, and a separate TatA complex, containing only TatA subunits. Substrates initially bind to the TatABC complex, which probably triggers association of the separate TatA complex to form the active translocon.

Its subcellular location is the cell membrane. In terms of biological role, part of the twin-arginine translocation (Tat) system that transports large folded proteins containing a characteristic twin-arginine motif in their signal peptide across membranes. TatA could form the protein-conducting channel of the Tat system. The polypeptide is Sec-independent protein translocase protein TatA (Rhodococcus jostii (strain RHA1)).